The primary structure comprises 132 residues: Amicyanin (132 aa).

A signal peptide spans 1–26; it reads MISAKTLRPAIAAIALFAIGATGAWA. Position 27 is a pyrrolidone carboxylic acid (Q27). One can recognise a Plastocyanin-like domain in the interval 27–132; the sequence is QDKITVTSEK…PFMRGKVIVE (106 aa). H80, C119, H122, and M125 together coordinate Cu cation.

It depends on Cu cation as a cofactor.

The protein resides in the periplasm. It participates in one-carbon metabolism; methylamine degradation. In terms of biological role, primary acceptor of electrons from methylamine dehydrogenase. Passes those electrons on either a soluble cytochrome c or to pseudoazurin. In Paracoccus versutus (Thiobacillus versutus), this protein is Amicyanin (mauC).